Consider the following 266-residue polypeptide: NADP-dependent mannitol dehydrogenase (266 aa).

Residues S53, N107, and K140 each contribute to the NADP(+) site. S159 serves as the catalytic Proton donor. The NADP(+) site is built by Y174, K178, I206, and T208. The active-site Proton acceptor is Y174. Residue K178 is the Lowers pKa of active site Tyr of the active site.

The protein belongs to the short-chain dehydrogenases/reductases (SDR) family. In terms of assembly, homotetramer.

It catalyses the reaction D-mannitol + NADP(+) = D-fructose + NADPH + H(+). Functionally, D-mannitol 2-dehydrogenase which is not necessary for D-mannitol catabolism. D-mannitol metabolism occurs via at least two different routes involving mannitol dehydrogenase (MDH) or mannitol 1-phosphate dehydrogenase, and the exact physiological role of mannitol dehydrogenases remains unclear. The polypeptide is NADP-dependent mannitol dehydrogenase (Hypocrea jecorina (strain ATCC 56765 / BCRC 32924 / NRRL 11460 / Rut C-30) (Trichoderma reesei)).